Here is a 406-residue protein sequence, read N- to C-terminus: F-box/WD repeat-containing protein mec-15 (406 aa).

One can recognise an F-box domain in the interval 6–53 (PTELISLPSELLCHLFTYLPQRQLITEIPLVCRRFNTILNDDKFWSRR). WD repeat units lie at residues 101-142 (GHSA…NGED), 156-195 (AHSG…ALQN), 242-279 (LHKR…KPVL), 281-320 (EYSP…VLQT), and 365-406 (SHEL…DQEN).

May interact with the SCF ubiquitin ligase complex component skr-1. In terms of tissue distribution, expressed in several neurons in the head, tail and ventral cord, but absent in touch receptor neurons in adults. Expressed in GABAergic and cholinergic motor neurons.

Its subcellular location is the perikaryon. Functionally, plays a role in mechanosensory transduction (touch sensitivity), touch receptor neuron development and synapse formation. Regulates expression of the protein snb-1 and the distribution of synaptic vesicles at synapses to promote synaptic transmission at the neuromuscular junctions of GABAergic motor neurons. This chain is F-box/WD repeat-containing protein mec-15, found in Caenorhabditis elegans.